A 262-amino-acid chain; its full sequence is ATP synthase subunit a (262 aa).

The next 7 membrane-spanning stretches (helical) occupy residues 30-50, 64-84, 91-111, 123-143, 149-169, 195-215, and 220-240; these read ITSL…LTIF, WNIV…DQIG, LIYF…NILG, ISVT…IGFS, FFSL…LVLI, LFGV…SLLL, and ITLP…VALL.

Belongs to the ATPase A chain family. In terms of assembly, F-type ATPases have 2 components, CF(1) - the catalytic core - and CF(0) - the membrane proton channel. CF(1) has five subunits: alpha(3), beta(3), gamma(1), delta(1), epsilon(1). CF(0) has three main subunits: a, b and c.

The protein localises to the mitochondrion inner membrane. Functionally, mitochondrial membrane ATP synthase (F(1)F(0) ATP synthase or Complex V) produces ATP from ADP in the presence of a proton gradient across the membrane which is generated by electron transport complexes of the respiratory chain. F-type ATPases consist of two structural domains, F(1) - containing the extramembraneous catalytic core and F(0) - containing the membrane proton channel, linked together by a central stalk and a peripheral stalk. During catalysis, ATP synthesis in the catalytic domain of F(1) is coupled via a rotary mechanism of the central stalk subunits to proton translocation. Key component of the proton channel; it may play a direct role in the translocation of protons across the membrane. This is ATP synthase subunit a (ATP6) from Allomyces macrogynus.